A 411-amino-acid chain; its full sequence is UPF0761 membrane protein PA14_51960 (411 aa).

A run of 6 helical transmembrane segments spans residues 36–56 (LFAV…IPAF), 92–112 (HLTW…LVTI), 132–152 (FLLY…GFAV), 174–194 (LLGL…YSAV), 207–229 (GGVF…VSLF), and 244–264 (IFLL…VLVC).

The protein belongs to the UPF0761 family.

It localises to the cell inner membrane. The polypeptide is UPF0761 membrane protein PA14_51960 (Pseudomonas aeruginosa (strain UCBPP-PA14)).